Consider the following 193-residue polypeptide: p53 apoptosis effector related to PMP-22 (193 aa).

The next 4 membrane-spanning stretches (helical) occupy residues 12–32 (RWIL…ALAG), 79–99 (AMLF…FFAL), 110–130 (VIGG…VIYP), and 151–171 (WAYG…FFFC).

This sequence belongs to the TMEM47 family. In terms of assembly, (Microbial infection) Interacts with S.typhimurium sipA and sctB1/sipC. As to expression, expressed in skin, heart, placental, liver, pancreas, keratinocytes and dermal fibroblasts. May translocate to the intestinal apical epithelial cell surface via sipA and sctB1/sipC-promoted exocytic translocation following infection by S. Typhimurium.

It is found in the cell junction. It localises to the desmosome. Its subcellular location is the cell membrane. The protein resides in the cytoplasm. In terms of biological role, component of intercellular desmosome junctions. Plays a role in stratified epithelial integrity and cell-cell adhesion by promoting desmosome assembly. Thereby plays a role in barrier function of the skin against infection. Plays a role in mammary epithelial tissue homeostasis and remodeling during and after pregnancy, potentially via its involvement in desmosome cell-cell junctions. Required for tooth enamel development via facilitating desmosome-mediated ameloblast adhesion to the stratum intermedium during the transitional stage of amelogenesis. May also play a role in downstream transcriptional regulation of other genes involved in amelogenesis such as AMBN, ENAM, MMP20 and KLK4. Plays a role as an effector in the TP53-dependent apoptotic pathway. Positively regulates apoptosis in T-helper 17 (Th17) cell populations via caspase-dependent signaling. Promotes neutrophil transepithelial migration in response to chemoattractants such as hepoxilin A3 (HXA3), N-Formylmethionyl-leucyl-phenylalanine (fMLP) and CXCL8/IL-8. Required for neutrophil transepithelial migration in response to S.typhimurium infection. May act as a positive regulator of endothelial cell apoptosis in response to blood flow-derived shear stress. This Homo sapiens (Human) protein is p53 apoptosis effector related to PMP-22.